Reading from the N-terminus, the 150-residue chain is Large ribosomal subunit protein bL9 (150 aa).

The protein belongs to the bacterial ribosomal protein bL9 family.

Its function is as follows. Binds to the 23S rRNA. This Staphylococcus aureus (strain NCTC 8325 / PS 47) protein is Large ribosomal subunit protein bL9.